We begin with the raw amino-acid sequence, 385 residues long: ATP phosphoribosyltransferase regulatory subunit (385 aa).

The protein belongs to the class-II aminoacyl-tRNA synthetase family. HisZ subfamily. As to quaternary structure, heteromultimer composed of HisG and HisZ subunits.

The protein localises to the cytoplasm. It functions in the pathway amino-acid biosynthesis; L-histidine biosynthesis; L-histidine from 5-phospho-alpha-D-ribose 1-diphosphate: step 1/9. Functionally, required for the first step of histidine biosynthesis. May allow the feedback regulation of ATP phosphoribosyltransferase activity by histidine. This Bordetella pertussis (strain Tohama I / ATCC BAA-589 / NCTC 13251) protein is ATP phosphoribosyltransferase regulatory subunit.